The primary structure comprises 88 residues: Beta-insect excitatory toxin BmKIT1 (88 aa).

Positions 1 to 18 (MKFFLIFLVIFPIMGVLG) are cleaved as a signal peptide. The region spanning 20–83 (KNGYAVDSSG…IKDATKSYCD (64 aa)) is the LCN-type CS-alpha/beta domain. Disulfide bonds link Cys-34–Cys-55, Cys-40–Cys-60, Cys-44–Cys-62, and Cys-56–Cys-82. Ile-87 carries the post-translational modification Isoleucine amide.

It belongs to the long (4 C-C) scorpion toxin superfamily. Sodium channel inhibitor family. Beta subfamily. As to expression, expressed by the venom gland.

The protein resides in the secreted. Functionally, excitatory insect beta-toxins induce a spastic paralysis. They bind voltage-independently at site-4 of sodium channels (Nav) and shift the voltage of activation toward more negative potentials thereby affecting sodium channel activation and promoting spontaneous and repetitive firing. This toxin is active only on insects. The sequence is that of Beta-insect excitatory toxin BmKIT1 from Olivierus martensii (Manchurian scorpion).